We begin with the raw amino-acid sequence, 478 residues long: Glucose-6-phosphate 1-dehydrogenase (478 aa).

NADP(+) contacts are provided by residues Arg-48, 86-87 (DF), and Lys-142. Substrate-binding residues include His-172, Lys-176, Glu-210, and Asp-229. His-234 serves as the catalytic Proton acceptor. Positions 334 and 339 each coordinate substrate.

The protein belongs to the glucose-6-phosphate dehydrogenase family.

It carries out the reaction D-glucose 6-phosphate + NADP(+) = 6-phospho-D-glucono-1,5-lactone + NADPH + H(+). It participates in carbohydrate degradation; pentose phosphate pathway; D-ribulose 5-phosphate from D-glucose 6-phosphate (oxidative stage): step 1/3. Catalyzes the oxidation of glucose 6-phosphate to 6-phosphogluconolactone. This Borreliella burgdorferi (strain ATCC 35210 / DSM 4680 / CIP 102532 / B31) (Borrelia burgdorferi) protein is Glucose-6-phosphate 1-dehydrogenase.